A 107-amino-acid polypeptide reads, in one-letter code: Iron-sulfur cluster assembly protein CyaY (107 aa).

Belongs to the frataxin family.

In terms of biological role, involved in iron-sulfur (Fe-S) cluster assembly. May act as a regulator of Fe-S biogenesis. This is Iron-sulfur cluster assembly protein CyaY from Neisseria gonorrhoeae (strain ATCC 700825 / FA 1090).